A 190-amino-acid polypeptide reads, in one-letter code: Probable gluconokinase (190 aa).

7-14 (GVSGSGKT) is a binding site for ATP.

It belongs to the gluconokinase GntK/GntV family.

The catalysed reaction is D-gluconate + ATP = 6-phospho-D-gluconate + ADP + H(+). Its pathway is carbohydrate acid metabolism; D-gluconate degradation. In Xenopus tropicalis (Western clawed frog), this protein is Probable gluconokinase (idnk).